We begin with the raw amino-acid sequence, 149 residues long: Cell division protein SepF (149 aa).

The interval 12–57 is disordered; sequence SNEEDDYYEEDGYEQSQQQEQQTTQQTSSQPRFVRQTTQSQTPAGL. A compositionally biased stretch (acidic residues) spans 13–24; the sequence is NEEDDYYEEDGY. Low complexity predominate over residues 25-41; it reads EQSQQQEQQTTQQTSSQ. A compositionally biased stretch (polar residues) spans 46 to 57; that stretch reads RQTTQSQTPAGL.

Belongs to the SepF family. In terms of assembly, homodimer. Interacts with FtsZ.

The protein resides in the cytoplasm. Cell division protein that is part of the divisome complex and is recruited early to the Z-ring. Probably stimulates Z-ring formation, perhaps through the cross-linking of FtsZ protofilaments. Its function overlaps with FtsA. This is Cell division protein SepF from Leuconostoc mesenteroides subsp. mesenteroides (strain ATCC 8293 / DSM 20343 / BCRC 11652 / CCM 1803 / JCM 6124 / NCDO 523 / NBRC 100496 / NCIMB 8023 / NCTC 12954 / NRRL B-1118 / 37Y).